Reading from the N-terminus, the 89-residue chain is Small ribosomal subunit protein uS15 (89 aa).

The protein belongs to the universal ribosomal protein uS15 family. Part of the 30S ribosomal subunit. Forms a bridge to the 50S subunit in the 70S ribosome, contacting the 23S rRNA.

Its function is as follows. One of the primary rRNA binding proteins, it binds directly to 16S rRNA where it helps nucleate assembly of the platform of the 30S subunit by binding and bridging several RNA helices of the 16S rRNA. Forms an intersubunit bridge (bridge B4) with the 23S rRNA of the 50S subunit in the ribosome. In Erwinia tasmaniensis (strain DSM 17950 / CFBP 7177 / CIP 109463 / NCPPB 4357 / Et1/99), this protein is Small ribosomal subunit protein uS15.